The primary structure comprises 577 residues: Sulfite reductase [NADPH] hemoprotein beta-component (577 aa).

The [4Fe-4S] cluster site is built by Cys440, Cys446, Cys486, and Cys490. Cys490 contributes to the siroheme binding site.

It belongs to the nitrite and sulfite reductase 4Fe-4S domain family. As to quaternary structure, alpha(8)-beta(8). The alpha component is a flavoprotein, the beta component is a hemoprotein. The cofactor is siroheme. [4Fe-4S] cluster is required as a cofactor.

It catalyses the reaction hydrogen sulfide + 3 NADP(+) + 3 H2O = sulfite + 3 NADPH + 4 H(+). It functions in the pathway sulfur metabolism; hydrogen sulfide biosynthesis; hydrogen sulfide from sulfite (NADPH route): step 1/1. Functionally, component of the sulfite reductase complex that catalyzes the 6-electron reduction of sulfite to sulfide. This is one of several activities required for the biosynthesis of L-cysteine from sulfate. In Vibrio cholerae serotype O1 (strain ATCC 39315 / El Tor Inaba N16961), this protein is Sulfite reductase [NADPH] hemoprotein beta-component.